The chain runs to 183 residues: ATP synthase subunit delta (183 aa).

The protein belongs to the ATPase delta chain family. In terms of assembly, F-type ATPases have 2 components, F(1) - the catalytic core - and F(0) - the membrane proton channel. F(1) has five subunits: alpha(3), beta(3), gamma(1), delta(1), epsilon(1). F(0) has three main subunits: a(1), b(2) and c(10-14). The alpha and beta chains form an alternating ring which encloses part of the gamma chain. F(1) is attached to F(0) by a central stalk formed by the gamma and epsilon chains, while a peripheral stalk is formed by the delta and b chains.

It is found in the cell inner membrane. In terms of biological role, f(1)F(0) ATP synthase produces ATP from ADP in the presence of a proton or sodium gradient. F-type ATPases consist of two structural domains, F(1) containing the extramembraneous catalytic core and F(0) containing the membrane proton channel, linked together by a central stalk and a peripheral stalk. During catalysis, ATP synthesis in the catalytic domain of F(1) is coupled via a rotary mechanism of the central stalk subunits to proton translocation. This protein is part of the stalk that links CF(0) to CF(1). It either transmits conformational changes from CF(0) to CF(1) or is implicated in proton conduction. In Thermosipho africanus (strain TCF52B), this protein is ATP synthase subunit delta.